Consider the following 72-residue polypeptide: uncharacterized protein (72 aa).

The protein resides in the host cytoplasm. This is an uncharacterized protein from Enterobacteriaceae (Bacteriophage Mu).